The sequence spans 892 residues: Alanine--tRNA ligase (892 aa).

His-577, His-581, Cys-680, and His-684 together coordinate Zn(2+).

The protein belongs to the class-II aminoacyl-tRNA synthetase family. Requires Zn(2+) as cofactor.

The protein resides in the cytoplasm. It carries out the reaction tRNA(Ala) + L-alanine + ATP = L-alanyl-tRNA(Ala) + AMP + diphosphate. Functionally, catalyzes the attachment of alanine to tRNA(Ala) in a two-step reaction: alanine is first activated by ATP to form Ala-AMP and then transferred to the acceptor end of tRNA(Ala). Also edits incorrectly charged Ser-tRNA(Ala) and Gly-tRNA(Ala) via its editing domain. This Paenarthrobacter aurescens (strain TC1) protein is Alanine--tRNA ligase.